We begin with the raw amino-acid sequence, 719 residues long: Photosystem I P700 chlorophyll a apoprotein A1 (719 aa).

Helical transmembrane passes span 60-83 (IFSAHFGQLSIIFIWLSGMYFHGA), 146-169 (LYCTAIGALIFAGLMLFAGWFHYH), 185-209 (LNHHLAGLLGLGSLGWAGHQVHVSL), 281-299 (TAHHHIAIAVLFLIAGHMY), 336-359 (WHAQLAVNLAMLGSLTIIVAHHMY), 375-401 (LSLFTHHMWIGGFLVVGAAAHAAIFMV), 423-445 (AIISHLNWVCIFLGFHSFGLYIH), and 521-539 (FLVHHIHAFTIHVTVLILL). Residues Cys563 and Cys572 each coordinate [4Fe-4S] cluster. The next 2 membrane-spanning stretches (helical) occupy residues 579–600 (HVFLGLFWMYNSISVVIFHFSW) and 654–676 (LSAYGLLFLGAHFVWAFSLMFLF). His665 is a binding site for chlorophyll a'. Positions 673 and 681 each coordinate chlorophyll a. A phylloquinone-binding site is contributed by Trp682. Residues 714–719 (AVGVAH) traverse the membrane as a helical segment.

This sequence belongs to the PsaA/PsaB family. As to quaternary structure, the PsaA/B heterodimer binds the P700 chlorophyll special pair and subsequent electron acceptors. PSI consists of a core antenna complex that captures photons, and an electron transfer chain that converts photonic excitation into a charge separation. The eukaryotic PSI reaction center is composed of at least 11 subunits. P700 is a chlorophyll a/chlorophyll a' dimer, A0 is one or more chlorophyll a, A1 is one or both phylloquinones and FX is a shared 4Fe-4S iron-sulfur center. is required as a cofactor.

It localises to the plastid. The protein resides in the chloroplast thylakoid membrane. It catalyses the reaction reduced [plastocyanin] + hnu + oxidized [2Fe-2S]-[ferredoxin] = oxidized [plastocyanin] + reduced [2Fe-2S]-[ferredoxin]. Its function is as follows. PsaA and PsaB bind P700, the primary electron donor of photosystem I (PSI), as well as the electron acceptors A0, A1 and FX. PSI is a plastocyanin-ferredoxin oxidoreductase, converting photonic excitation into a charge separation, which transfers an electron from the donor P700 chlorophyll pair to the spectroscopically characterized acceptors A0, A1, FX, FA and FB in turn. Oxidized P700 is reduced on the lumenal side of the thylakoid membrane by plastocyanin. This is Photosystem I P700 chlorophyll a apoprotein A1 from Equisetum palustre (Marsh horsetail).